The primary structure comprises 29 residues: Cytochrome b6-f complex subunit 8 (29 aa).

A helical membrane pass occupies residues 3 to 23; that stretch reads IVGIAWAALMVVFTFSLSLVV.

It belongs to the PetN family. In terms of assembly, the 4 large subunits of the cytochrome b6-f complex are cytochrome b6, subunit IV (17 kDa polypeptide, PetD), cytochrome f and the Rieske protein, while the 4 small subunits are PetG, PetL, PetM and PetN. The complex functions as a dimer.

The protein resides in the plastid. The protein localises to the chloroplast thylakoid membrane. Functionally, component of the cytochrome b6-f complex, which mediates electron transfer between photosystem II (PSII) and photosystem I (PSI), cyclic electron flow around PSI, and state transitions. The chain is Cytochrome b6-f complex subunit 8 from Cryptomeria japonica (Japanese cedar).